A 294-amino-acid polypeptide reads, in one-letter code: tRNA dimethylallyltransferase (294 aa).

An ATP-binding site is contributed by 11 to 18; sequence GPTAVGKT. 13–18 provides a ligand contact to substrate; sequence TAVGKT. The interaction with substrate tRNA stretch occupies residues 36-39; the sequence is DSQQ.

Belongs to the IPP transferase family. As to quaternary structure, monomer. Mg(2+) is required as a cofactor.

The catalysed reaction is adenosine(37) in tRNA + dimethylallyl diphosphate = N(6)-dimethylallyladenosine(37) in tRNA + diphosphate. Its function is as follows. Catalyzes the transfer of a dimethylallyl group onto the adenine at position 37 in tRNAs that read codons beginning with uridine, leading to the formation of N6-(dimethylallyl)adenosine (i(6)A). The chain is tRNA dimethylallyltransferase from Lactococcus lactis subsp. cremoris (strain SK11).